Reading from the N-terminus, the 494-residue chain is BTB/POZ domain and ankyrin repeat-containing protein NH5.1 (494 aa).

The BTB domain occupies 25 to 130 (SDVAFSVEGR…LYSGQASVAA (106 aa)). The segment at 60–94 (NHQPPPPPPPLNWPMAGGGGGGSGGGGRGGAGGGG) is disordered. Pro residues predominate over residues 61–71 (HQPPPPPPPLN). Residues 75 to 94 (AGGGGGGSGGGGRGGAGGGG) are compositionally biased toward gly residues. The C2HC NPR-type zinc-finger motif lies at 136–150 (LPGCGARGCWHTRCG). The Zn(2+) site is built by C139, C144, H146, and C149. ANK repeat units lie at residues 274 to 302 (NKIRRMRRALDAADIELVKLMVMGEGLDL), 303 to 333 (DDALAVHYAVQHCNRDVVKALLELGAADVNS), 338 to 367 (TGKTALHLAAEMVSPDMVSVLLDHHADPNS), and 371 to 405 (DGVTPLDVLRSLTSEFLFKGAVPGLTHIEPNKLRL). 2 disordered regions span residues 421-443 (DGAPVTGGAEAGGSDGGNFPRSD) and 469-494 (AAGEGRKSNNGRGSPPPAMYFPNGFA).

The protein belongs to the plant 'ANKYRIN-BTB/POZ' family. 'NOOT-BOP-COCH-like' (NBCL) subfamily. As to quaternary structure, homodimer. Interacts with TGAL5, TGAL7, TGAL8 and TGAL9.

It is found in the nucleus. Its subcellular location is the cytoplasm. Its pathway is protein modification; protein ubiquitination. May act as a substrate-specific adapter of an E3 ubiquitin-protein ligase complex (CUL3-RBX1-BTB) which mediates the ubiquitination and subsequent proteasomal degradation of target proteins. Transcriptional co-regulator involved in the promotion of leaf and floral meristem fate and determinacy. Required for the abscission of senescent organs, probably by regulating the cell wall disorganization in abscission zones (AZs, e.g. pulvini at the base of leaves). This chain is BTB/POZ domain and ankyrin repeat-containing protein NH5.1, found in Oryza sativa subsp. japonica (Rice).